Here is a 295-residue protein sequence, read N- to C-terminus: uncharacterized protein (295 aa).

The protein resides in the plastid. Its subcellular location is the chloroplast. This is an uncharacterized protein from Euglena gracilis.